We begin with the raw amino-acid sequence, 520 residues long: Cobalt-zinc-cadmium resistance protein CzcB (520 aa).

Residues 9 to 29 (AAIAAIVLVGGVATGGVLLSG) traverse the membrane as a helical segment. The disordered stretch occupies residues 28–85 (SGRSAPEEQGGHSESKGHGDTEHHGKQAAEADHKDDKSHGDGEHHEVKKGPNGGALFS). The span at 32–76 (APEEQGGHSESKGHGDTEHHGKQAAEADHKDDKSHGDGEHHEVKK) shows a compositional bias: basic and acidic residues. Residues 286–320 (EQKISAEQDYLSARNALQEAQISVQNAQQKLTAIG) adopt a coiled-coil conformation.

The protein belongs to the membrane fusion protein (MFP) (TC 8.A.1) family.

The protein localises to the cell inner membrane. In terms of biological role, czcA and CzcB together would act in zinc efflux nearly as effectively as the complete czc efflux system (CzcABC). The CzcB protein is thought to funnel zinc cations to the CzcA transport protein. The polypeptide is Cobalt-zinc-cadmium resistance protein CzcB (czcB) (Cupriavidus metallidurans (strain ATCC 43123 / DSM 2839 / NBRC 102507 / CH34) (Ralstonia metallidurans)).